A 470-amino-acid polypeptide reads, in one-letter code: ATP synthase subunit beta (470 aa).

155-162 (GGAGVGKT) provides a ligand contact to ATP.

The protein belongs to the ATPase alpha/beta chains family. As to quaternary structure, F-type ATPases have 2 components, CF(1) - the catalytic core - and CF(0) - the membrane proton channel. CF(1) has five subunits: alpha(3), beta(3), gamma(1), delta(1), epsilon(1). CF(0) has three main subunits: a(1), b(2) and c(9-12). The alpha and beta chains form an alternating ring which encloses part of the gamma chain. CF(1) is attached to CF(0) by a central stalk formed by the gamma and epsilon chains, while a peripheral stalk is formed by the delta and b chains.

The protein localises to the cell membrane. It catalyses the reaction ATP + H2O + 4 H(+)(in) = ADP + phosphate + 5 H(+)(out). Functionally, produces ATP from ADP in the presence of a proton gradient across the membrane. The catalytic sites are hosted primarily by the beta subunits. The polypeptide is ATP synthase subunit beta (Staphylococcus epidermidis (strain ATCC 35984 / DSM 28319 / BCRC 17069 / CCUG 31568 / BM 3577 / RP62A)).